A 272-amino-acid polypeptide reads, in one-letter code: Endoplasmic reticulum resident protein 27 (272 aa).

The signal sequence occupies residues 1–25 (MKITRSRCLILSFVLVCGLVPEVTA). Residues 39–152 (EPIWLTDVPA…WVTEYSPMIA (114 aa)) enclose the Thioredoxin domain. Asn91 and Asn100 each carry an N-linked (GlcNAc...) asparagine glycan. The segment at 230 to 233 (DKWD) is PDIA3-binding site. The short motif at 269 to 272 (KEEL) is the Prevents secretion from ER element.

The protein belongs to the protein disulfide isomerase family. As to quaternary structure, interacts with PDIA3.

The protein resides in the endoplasmic reticulum lumen. Specifically binds unfolded proteins and may recruit protein disulfide isomerase PDIA3 to unfolded substrates. Binds protein substrates via a hydrophobic pocket in the C-terminal domain. May play a role in the unfolded stress response. The chain is Endoplasmic reticulum resident protein 27 (Erp27) from Mus musculus (Mouse).